Reading from the N-terminus, the 200-residue chain is NAD(P)H dehydrogenase (quinone) (200 aa).

Residues 4–191 (VLVLYYSSYG…DIARYQGKHV (188 aa)) form the Flavodoxin-like domain. Residues 10–15 (SSYGHV) and 79–81 (TRF) each bind FMN. Tyr-12 provides a ligand contact to NAD(+). Trp-99 provides a ligand contact to substrate. FMN-binding positions include 114-120 (STGTQHG) and His-135.

The protein belongs to the WrbA family. Requires FMN as cofactor.

The catalysed reaction is a quinone + NADH + H(+) = a quinol + NAD(+). It carries out the reaction a quinone + NADPH + H(+) = a quinol + NADP(+). The protein is NAD(P)H dehydrogenase (quinone) of Burkholderia orbicola (strain MC0-3).